Consider the following 482-residue polypeptide: Abscisic acid 8'-hydroxylase 2 (482 aa).

A helical membrane pass occupies residues 20–40; that stretch reads PALITLTIVVVVVVLLFKWWL. Position 431 (cysteine 431) interacts with heme.

Belongs to the cytochrome P450 family. Heme is required as a cofactor. As to expression, mainly expressed in dry seeds. Lower expression in rosette leaves, flowers, siliques and stems. Not expressed in roots. Expressed in both endosperm and vascular tissues of embryo during the seed development and in cortex and endodermis in germinating embryo.

It is found in the membrane. It catalyses the reaction 2-cis-(+)-abscisate + reduced [NADPH--hemoprotein reductase] + O2 = (+)-8'-hydroxyabscisate + oxidized [NADPH--hemoprotein reductase] + H2O + H(+). The protein operates within plant hormone degradation; abscisic acid degradation. In terms of biological role, involved in the oxidative degradation of abscisic acid, but not in the isomerization of the produced 8'-hydroxyabscisic acid (8'-OH-ABA) to (-)-phaseic acid (PA). Involved in the control of seed dormancy and germination. This chain is Abscisic acid 8'-hydroxylase 2 (CYP707A2), found in Arabidopsis thaliana (Mouse-ear cress).